The chain runs to 275 residues: Phosphate import ATP-binding protein PstB 1 (275 aa).

One can recognise an ABC transporter domain in the interval 22-261; sequence IETRDLSVYY…DRTEKIFNSP (240 aa). 54-61 serves as a coordination point for ATP; it reads GPSGCGKS.

It belongs to the ABC transporter superfamily. Phosphate importer (TC 3.A.1.7) family. The complex is composed of two ATP-binding proteins (PstB), two transmembrane proteins (PstC and PstA) and a solute-binding protein (PstS).

It is found in the cell inner membrane. It carries out the reaction phosphate(out) + ATP + H2O = ADP + 2 phosphate(in) + H(+). Part of the ABC transporter complex PstSACB involved in phosphate import. Responsible for energy coupling to the transport system. The sequence is that of Phosphate import ATP-binding protein PstB 1 from Synechococcus sp. (strain JA-3-3Ab) (Cyanobacteria bacterium Yellowstone A-Prime).